Here is a 66-residue protein sequence, read N- to C-terminus: Large ribosomal subunit protein bL32 (66 aa).

It belongs to the bacterial ribosomal protein bL32 family.

This Rickettsia bellii (strain OSU 85-389) protein is Large ribosomal subunit protein bL32.